The primary structure comprises 351 residues: Dihydroorotate dehydrogenase (quinone) (351 aa).

FMN contacts are provided by residues Ala61–Lys65 and Thr85. Lys65 contributes to the substrate binding site. Substrate is bound at residue Asn110–Phe114. Residues Asn139 and Asn172 each coordinate FMN. Asn172 serves as a coordination point for substrate. The Nucleophile role is filled by Ser175. Asn177 serves as a coordination point for substrate. Lys217 and Thr245 together coordinate FMN. Residue Asn246–Thr247 participates in substrate binding. FMN contacts are provided by residues Gly268, Gly297, and Tyr318–Ser319.

Belongs to the dihydroorotate dehydrogenase family. Type 2 subfamily. Monomer. FMN is required as a cofactor.

The protein localises to the cell membrane. It catalyses the reaction (S)-dihydroorotate + a quinone = orotate + a quinol. It functions in the pathway pyrimidine metabolism; UMP biosynthesis via de novo pathway; orotate from (S)-dihydroorotate (quinone route): step 1/1. In terms of biological role, catalyzes the conversion of dihydroorotate to orotate with quinone as electron acceptor. The chain is Dihydroorotate dehydrogenase (quinone) from Xanthomonas oryzae pv. oryzae (strain MAFF 311018).